Consider the following 219-residue polypeptide: 7-cyano-7-deazaguanine synthase (219 aa).

10–20 provides a ligand contact to ATP; the sequence is FSGGQDSTTCL. Positions 188, 197, 200, and 203 each coordinate Zn(2+).

Belongs to the QueC family. As to quaternary structure, homodimer. Zn(2+) serves as cofactor.

The enzyme catalyses 7-carboxy-7-deazaguanine + NH4(+) + ATP = 7-cyano-7-deazaguanine + ADP + phosphate + H2O + H(+). It functions in the pathway purine metabolism; 7-cyano-7-deazaguanine biosynthesis. In terms of biological role, catalyzes the ATP-dependent conversion of 7-carboxy-7-deazaguanine (CDG) to 7-cyano-7-deazaguanine (preQ(0)). This chain is 7-cyano-7-deazaguanine synthase, found in Clostridium botulinum (strain Loch Maree / Type A3).